We begin with the raw amino-acid sequence, 75 residues long: Small ribosomal subunit protein bS18 (75 aa).

Residues 1-11 are compositionally biased toward basic residues; it reads MAAKPFFRRRK. The segment at 1-21 is disordered; that stretch reads MAAKPFFRRRKTDPFEGENAP.

Belongs to the bacterial ribosomal protein bS18 family. Part of the 30S ribosomal subunit. Forms a tight heterodimer with protein bS6.

Functionally, binds as a heterodimer with protein bS6 to the central domain of the 16S rRNA, where it helps stabilize the platform of the 30S subunit. The polypeptide is Small ribosomal subunit protein bS18 (Jannaschia sp. (strain CCS1)).